A 346-amino-acid polypeptide reads, in one-letter code: Endosome-associated-trafficking regulator 1 (346 aa).

Polar residues predominate over residues 46-67 (FVSSNSKRAFSKDSNQSTTQFR). Disordered regions lie at residues 46–77 (FVSS…DGNL), 93–129 (LQED…GDES), and 153–173 (SPPA…SDSE). A coiled-coil region spans residues 170 to 317 (SDSEEGLRLL…SGAQSSIKQL (148 aa)).

Belongs to the ENTR1 family.

Its subcellular location is the cytoplasm. It localises to the early endosome. The protein resides in the endosome. It is found in the recycling endosome. The protein localises to the midbody. Its subcellular location is the cytoskeleton. It localises to the microtubule organizing center. The protein resides in the centrosome. It is found in the cilium basal body. Endosome-associated protein that plays a role in membrane receptor sorting, cytokinesis and ciliogenesis. This chain is Endosome-associated-trafficking regulator 1, found in Xenopus tropicalis (Western clawed frog).